The chain runs to 1460 residues: DNA-binding protein RFX7 (1460 aa).

The interval Met-1 to Val-34 is disordered. A DNA-binding region (RFX-type winged-helix) is located at residues Ala-108–Ala-183. The PxLPxI/L motif; mediates interaction with ANKRA2 and RFXANK signature appears at Pro-188–Leu-193. Residues Gln-308–Leu-352 are disordered. Ser-322 is modified (phosphoserine). A compositionally biased stretch (polar residues) spans Thr-337 to Leu-352. Phosphoserine is present on Ser-379. Residues Ser-404 to Pro-416 show a composition bias toward polar residues. The interval Ser-404–Arg-428 is disordered. Residues Ser-418 and Ser-455 each carry the phosphoserine modification. Residues Thr-481–Asn-513 show a composition bias toward polar residues. Disordered stretches follow at residues Thr-481–Glu-585, Thr-632–Pro-715, and Gln-917–Pro-1015. Residues Ser-515–Val-535 are compositionally biased toward low complexity. Over residues Val-537–Pro-549 the composition is skewed to basic and acidic residues. 2 stretches are compositionally biased toward polar residues: residues Gln-563–Ser-583 and Thr-632–Ser-644. Position 564 is a phosphothreonine (Thr-564). Residue Ser-662 is modified to Phosphoserine. Lys-704 carries the N6-acetyllysine modification. Polar residues-rich tracts occupy residues Thr-705–Pro-715 and Gln-917–His-933. Pro residues predominate over residues Thr-947 to Thr-963. Positions Gly-971–Cys-1009 are enriched in polar residues. Thr-988 is subject to Phosphothreonine. Residues Ser-1178 and Ser-1329 each carry the phosphoserine modification.

It belongs to the RFX family. In terms of assembly, interacts (via PxLPxI/L motif) with RFXANK (via ankyrin repeats). Interacts (via PxLPxI/L motif) with ANKRA2 (via ankyrin repeats). Widely expressed in many different tissue types including thymus and placenta, with high expression in brain. Expressed in both inhibitory and excitatory neurons in cortex.

It is found in the nucleus. Functionally, transcription factor. Acts as a transcriptional activator by binding to promoter regions of target genes, such as PDCD4, PIK3IP1, MXD4, PNRC1, and RFX5. Plays a role in natural killer (NK) cell maintenance and immunity. May play a role in the process of ciliogenesis in the neural tube and neural tube closure. This Homo sapiens (Human) protein is DNA-binding protein RFX7.